A 313-amino-acid chain; its full sequence is L-lactate dehydrogenase 1 (313 aa).

NAD(+)-binding positions include V15, D36, K41, Y66, and 80–81 (GA). Positions 83 and 89 each coordinate substrate. Residues S102, 119-121 (VSN), and S144 each bind NAD(+). 121–124 (NPVD) contributes to the substrate binding site. 149-152 (DTSR) provides a ligand contact to substrate. Residues R154 and H169 each contribute to the beta-D-fructose 1,6-bisphosphate site. Residue H176 is the Proton acceptor of the active site. Y222 is modified (phosphotyrosine). Substrate is bound at residue T231.

The protein belongs to the LDH/MDH superfamily. LDH family. Homotetramer.

It localises to the cytoplasm. It catalyses the reaction (S)-lactate + NAD(+) = pyruvate + NADH + H(+). Its pathway is fermentation; pyruvate fermentation to lactate; (S)-lactate from pyruvate: step 1/1. With respect to regulation, allosterically activated by fructose 1,6-bisphosphate (FBP). Its function is as follows. Catalyzes the conversion of lactate to pyruvate. The chain is L-lactate dehydrogenase 1 from Clostridium acetobutylicum (strain ATCC 824 / DSM 792 / JCM 1419 / IAM 19013 / LMG 5710 / NBRC 13948 / NRRL B-527 / VKM B-1787 / 2291 / W).